The following is a 321-amino-acid chain: Methionine import ATP-binding protein MetN (321 aa).

The ABC transporter domain maps to 2-237; sequence ISIKNVNKYY…NTKGLRKLIG (236 aa). 34–41 contributes to the ATP binding site; the sequence is GHSGAGKS.

This sequence belongs to the ABC transporter superfamily. Methionine importer (TC 3.A.1.24) family. In terms of assembly, the complex is composed of two ATP-binding proteins (MetN), two transmembrane proteins (MetI) and a solute-binding protein (MetQ).

Its subcellular location is the cell membrane. It carries out the reaction L-methionine(out) + ATP + H2O = L-methionine(in) + ADP + phosphate + H(+). The catalysed reaction is D-methionine(out) + ATP + H2O = D-methionine(in) + ADP + phosphate + H(+). Part of the ABC transporter complex MetNIQ involved in methionine import. Responsible for energy coupling to the transport system. The polypeptide is Methionine import ATP-binding protein MetN (Clostridioides difficile (strain 630) (Peptoclostridium difficile)).